Consider the following 89-residue polypeptide: Cell division topological specificity factor (89 aa).

It belongs to the MinE family.

In terms of biological role, prevents the cell division inhibition by proteins MinC and MinD at internal division sites while permitting inhibition at polar sites. This ensures cell division at the proper site by restricting the formation of a division septum at the midpoint of the long axis of the cell. The polypeptide is Cell division topological specificity factor (Clostridium beijerinckii (strain ATCC 51743 / NCIMB 8052) (Clostridium acetobutylicum)).